A 130-amino-acid polypeptide reads, in one-letter code: MTGNDPFTNALAGMDNAESVGHLSYTVEPASNIIGSVLEVLYDRGYVDGFEYVDDGKAGKFEVELKGAINECGAVKPRYSAGADEFEKWEKRYLPARDYGTLIVTTSHGVMSHYEAREEGIGGQVIAYVY.

Belongs to the universal ribosomal protein uS8 family. As to quaternary structure, part of the 30S ribosomal subunit.

In terms of biological role, one of the primary rRNA binding proteins, it binds directly to 16S rRNA central domain where it helps coordinate assembly of the platform of the 30S subunit. This Halorubrum lacusprofundi (strain ATCC 49239 / DSM 5036 / JCM 8891 / ACAM 34) protein is Small ribosomal subunit protein uS8.